The following is a 427-amino-acid chain: Endothelin-1 receptor (427 aa).

The first 20 residues, 1-20, serve as a signal peptide directing secretion; it reads METLCLRASFWLALVGCVIS. At 21–80 the chain is on the extracellular side; the sequence is DNPERYSTNLSNHVDDFTTFRGTELSFLVTTHQPTNLVLPSNGSMHNYCPQQTKITSAFK. Asn29 and Asn62 each carry an N-linked (GlcNAc...) asparagine glycan. Residues 81-102 form a helical membrane-spanning segment; the sequence is YINTVISCTIFIVGMVGNATLL. The Cytoplasmic portion of the chain corresponds to 103-112; sequence RIIYQNKCMR. Residues 113–132 traverse the membrane as a helical segment; that stretch reads NGPNALIASLALGDLIYVVI. Residues 133–159 are Extracellular-facing; sequence DLPINVFKLLAGRWPFDHNDFGVFLCK. An intrachain disulfide couples Cys158 to Cys239. A helical transmembrane segment spans residues 160-181; that stretch reads LFPFLQKSSVGITVLNLCALSV. Residues 182 to 205 are Cytoplasmic-facing; that stretch reads DRYRAVASWSRVQGIGIPLVTAIE. The helical transmembrane segment at 206 to 229 threads the bilayer; it reads IVSIWILSFILAIPEAIGFVMVPF. Topologically, residues 230-256 are extracellular; that stretch reads EYRGEQHKTCMLNATSKFMEFYQDVKD. Residues 257-278 traverse the membrane as a helical segment; that stretch reads WWLFGFYFCMPLVCTAIFYTLM. Residues 279–306 are Cytoplasmic-facing; it reads TCEMLNRRNGSLRIALSEHLKQRREVAK. A helical membrane pass occupies residues 307–328; that stretch reads TVFCLVVIFALCWFPLHLSRIL. The Extracellular portion of the chain corresponds to 329–347; that stretch reads KKTVYNEMDKNRCELLSFL. Residues 348–372 traverse the membrane as a helical segment; it reads LLMDYIGINLATMNSCINPIALYFV. Topologically, residues 373-427 are cytoplasmic; it reads SKKFKNCFQSCLCCCCYQSKSLMTSVPMNGTSIQWKNHDQNNHNTDRSSHKDSMN. The segment at 406–427 is disordered; sequence QWKNHDQNNHNTDRSSHKDSMN. The span at 408 to 427 shows a compositional bias: basic and acidic residues; that stretch reads KNHDQNNHNTDRSSHKDSMN. At Ser425 the chain carries Phosphoserine.

Belongs to the G-protein coupled receptor 1 family. Endothelin receptor subfamily. EDNRA sub-subfamily. In terms of assembly, interacts with HDAC7 and KAT5. In terms of tissue distribution, isoform 1, isoform 3 and isoform 4 are expressed in a variety of tissues, with highest levels in the aorta and cerebellum, followed by lung, atrium and cerebral cortex, lower levels in the placenta, kidney, adrenal gland, duodenum, colon, ventricle and liver but no expression in umbilical vein endothelial cells. Within the placenta, isoform 1, isoform 2, isoform 3 and isoform 4 are expressed in the villi and stem villi vessels.

The protein resides in the cell membrane. Functionally, receptor for endothelin-1. Mediates its action by association with G proteins that activate a phosphatidylinositol-calcium second messenger system. The rank order of binding affinities for ET-A is: ET1 &gt; ET2 &gt;&gt; ET3. The protein is Endothelin-1 receptor of Homo sapiens (Human).